Here is a 494-residue protein sequence, read N- to C-terminus: Peptidyl-prolyl cis-trans isomerase-like 4 (494 aa).

The PPIase cyclophilin-type domain occupies 1-172 (MSVLLETSAG…VDIRIKHTVI (172 aa)). The disordered stretch occupies residues 176 to 196 (PYPDPAGMREPSASPPPSKAQ). Residues 206–240 (EELLDVEASEEAAAEAERRRREREAAAQALTLEMM) are a coiled coil. The region spanning 253–331 (NVLFVCKLNP…RRIHVDFSQS (79 aa)) is the RRM domain. 2 stretches are compositionally biased toward basic and acidic residues: residues 391-418 (DLKG…DRST) and 425-494 (PRRD…YRRR). Residues 391-494 (DLKGRHDGDK…NRGRDDYRRR (104 aa)) are disordered.

The protein belongs to the cyclophilin-type PPIase family. PPIL4 subfamily.

The protein localises to the nucleus. It carries out the reaction [protein]-peptidylproline (omega=180) = [protein]-peptidylproline (omega=0). In terms of biological role, PPIases accelerate the folding of proteins. It catalyzes the cis-trans isomerization of proline imidic peptide bonds in oligopeptides. The sequence is that of Peptidyl-prolyl cis-trans isomerase-like 4 (cyp-6) from Neurospora crassa (strain ATCC 24698 / 74-OR23-1A / CBS 708.71 / DSM 1257 / FGSC 987).